The sequence spans 254 residues: MSKAPPLRLGVNIDHIATLRNARGGRHPDPLRAAFAAIEAGADGITAHLREDRRHIRDADMQRLKAEISKPLNFEMAATDDMIRIALGVKPHAVCLVPERREELTTEGGLDVVGQQASLGPAIARFNDAGIRTSLFIAADPAQIEMAAKLKAPAIEIHTGAWCDAITDGDAAKANTEWQRIFAGAALARSAGLEVHAGHGLDYATAETISELPQIVELNIGFYMIGEALFVGLGETVRAMRAAMDRGRAKAIAA.

N12 is a 3-amino-2-oxopropyl phosphate binding site. 14-15 serves as a coordination point for 1-deoxy-D-xylulose 5-phosphate; the sequence is DH. R23 provides a ligand contact to 3-amino-2-oxopropyl phosphate. The Proton acceptor role is filled by H48. Residues R50 and H55 each coordinate 1-deoxy-D-xylulose 5-phosphate. E75 acts as the Proton acceptor in catalysis. Position 105 (T105) interacts with 1-deoxy-D-xylulose 5-phosphate. H199 acts as the Proton donor in catalysis. 3-amino-2-oxopropyl phosphate-binding positions include G200 and 221-222; that span reads GF.

This sequence belongs to the PNP synthase family. As to quaternary structure, homooctamer; tetramer of dimers.

The protein localises to the cytoplasm. The enzyme catalyses 3-amino-2-oxopropyl phosphate + 1-deoxy-D-xylulose 5-phosphate = pyridoxine 5'-phosphate + phosphate + 2 H2O + H(+). Its pathway is cofactor biosynthesis; pyridoxine 5'-phosphate biosynthesis; pyridoxine 5'-phosphate from D-erythrose 4-phosphate: step 5/5. Functionally, catalyzes the complicated ring closure reaction between the two acyclic compounds 1-deoxy-D-xylulose-5-phosphate (DXP) and 3-amino-2-oxopropyl phosphate (1-amino-acetone-3-phosphate or AAP) to form pyridoxine 5'-phosphate (PNP) and inorganic phosphate. The protein is Pyridoxine 5'-phosphate synthase of Rhodopseudomonas palustris (strain ATCC BAA-98 / CGA009).